Here is a 262-residue protein sequence, read N- to C-terminus: Hydroxyethylthiazole kinase (262 aa).

Met-40 contacts substrate. Positions 116 and 162 each coordinate ATP. Gly-189 is a binding site for substrate.

The protein belongs to the Thz kinase family. Mg(2+) is required as a cofactor.

The enzyme catalyses 5-(2-hydroxyethyl)-4-methylthiazole + ATP = 4-methyl-5-(2-phosphooxyethyl)-thiazole + ADP + H(+). It participates in cofactor biosynthesis; thiamine diphosphate biosynthesis; 4-methyl-5-(2-phosphoethyl)-thiazole from 5-(2-hydroxyethyl)-4-methylthiazole: step 1/1. Functionally, catalyzes the phosphorylation of the hydroxyl group of 4-methyl-5-beta-hydroxyethylthiazole (THZ). The sequence is that of Hydroxyethylthiazole kinase from Clostridioides difficile (strain 630) (Peptoclostridium difficile).